Consider the following 715-residue polypeptide: Polyphosphate kinase (715 aa).

An ATP-binding site is contributed by N60. Residues R380 and R410 each coordinate Mg(2+). The active-site Phosphohistidine intermediate is H440. ATP is bound by residues Y473, R569, and H597.

Belongs to the polyphosphate kinase 1 (PPK1) family. The cofactor is Mg(2+). An intermediate of this reaction is the autophosphorylated ppk in which a phosphate is covalently linked to a histidine residue through a N-P bond.

It catalyses the reaction [phosphate](n) + ATP = [phosphate](n+1) + ADP. Functionally, catalyzes the reversible transfer of the terminal phosphate of ATP to form a long-chain polyphosphate (polyP). In Erythrobacter litoralis (strain HTCC2594), this protein is Polyphosphate kinase.